Here is a 267-residue protein sequence, read N- to C-terminus: Large ribosomal subunit protein uL2c (267 aa).

It belongs to the universal ribosomal protein uL2 family. In terms of assembly, part of the 50S ribosomal subunit.

Its subcellular location is the plastid. The protein localises to the apicoplast. The protein is Large ribosomal subunit protein uL2c (rpl2) of Toxoplasma gondii.